The primary structure comprises 292 residues: Acetyl-coenzyme A carboxylase carboxyl transferase subunit beta (292 aa).

The CoA carboxyltransferase N-terminal domain occupies 36–292; that stretch reads MWSKCEKCAK…LLRMHEVDYE (257 aa). Cys40, Cys43, Cys59, and Cys62 together coordinate Zn(2+). The C4-type zinc finger occupies 40–62; it reads CEKCAKILYTEDLRENFNVCPNC.

This sequence belongs to the AccD/PCCB family. In terms of assembly, acetyl-CoA carboxylase is a heterohexamer composed of biotin carboxyl carrier protein (AccB), biotin carboxylase (AccC) and two subunits each of ACCase subunit alpha (AccA) and ACCase subunit beta (AccD). It depends on Zn(2+) as a cofactor.

The protein resides in the cytoplasm. The catalysed reaction is N(6)-carboxybiotinyl-L-lysyl-[protein] + acetyl-CoA = N(6)-biotinyl-L-lysyl-[protein] + malonyl-CoA. Its pathway is lipid metabolism; malonyl-CoA biosynthesis; malonyl-CoA from acetyl-CoA: step 1/1. Functionally, component of the acetyl coenzyme A carboxylase (ACC) complex. Biotin carboxylase (BC) catalyzes the carboxylation of biotin on its carrier protein (BCCP) and then the CO(2) group is transferred by the transcarboxylase to acetyl-CoA to form malonyl-CoA. In Clostridium perfringens (strain 13 / Type A), this protein is Acetyl-coenzyme A carboxylase carboxyl transferase subunit beta.